Here is an 820-residue protein sequence, read N- to C-terminus: Serine/threonine-protein phosphatase 4 regulatory subunit 3-A (820 aa).

In terms of domain architecture, WH1 spans 1-100; it reads MSDTRRRVKV…DEIWEKICQV (100 aa). Acidic residues predominate over residues 682–694; sequence ELWFNEDDEEEGE. Disordered regions lie at residues 682-712 and 750-820; these read ELWF…FPEG and AANG…RLGS. The span at 701–712 shows a compositional bias: basic and acidic residues; the sequence is EKTKPEDDFPEG. 2 stretches are compositionally biased toward polar residues: residues 750-761 and 768-790; these read AANGANSTNSKS and PATS…STKG. Acidic residues predominate over residues 798 to 809; that stretch reads YPDDEDEEEEED.

This sequence belongs to the SMEK family. As to quaternary structure, serine/threonine-protein phosphatase 4 (PP4) occurs in different assemblies of the catalytic and one or more regulatory subunits.

Functionally, regulatory subunit of serine/threonine-protein phosphatase 4 (PP4). This Xenopus laevis (African clawed frog) protein is Serine/threonine-protein phosphatase 4 regulatory subunit 3-A.